We begin with the raw amino-acid sequence, 604 residues long: Aspartate--tRNA(Asp/Asn) ligase (604 aa).

An L-aspartate-binding site is contributed by Glu175. An aspartate region spans residues 199–202 (QQFK). L-aspartate contacts are provided by Arg221 and His456. ATP is bound at residue 221–223 (RDE). Glu496 is a binding site for ATP. Residue Arg503 participates in L-aspartate binding. ATP is bound at residue 548–551 (GVDR).

It belongs to the class-II aminoacyl-tRNA synthetase family. Type 1 subfamily. As to quaternary structure, homodimer.

The protein localises to the cytoplasm. The enzyme catalyses tRNA(Asx) + L-aspartate + ATP = L-aspartyl-tRNA(Asx) + AMP + diphosphate. Aspartyl-tRNA synthetase with relaxed tRNA specificity since it is able to aspartylate not only its cognate tRNA(Asp) but also tRNA(Asn). Reaction proceeds in two steps: L-aspartate is first activated by ATP to form Asp-AMP and then transferred to the acceptor end of tRNA(Asp/Asn). The polypeptide is Aspartate--tRNA(Asp/Asn) ligase (Methylorubrum populi (strain ATCC BAA-705 / NCIMB 13946 / BJ001) (Methylobacterium populi)).